A 1969-amino-acid polypeptide reads, in one-letter code: MPKMIKGTEFIVAKKTKNKKKNHFEDIQTTNDINEEESEAIFGNLYDGADEVLPASLAYENGQLPEDGSIQVAFDADDNAYYISYDPENEIFIEPYEKYELDVSALYDAEGNPFDFFANYHVEGAETSQEEESGEYWEQFVGVEGYGYYDENEEWVWTGYFDEDNKFIPNEEEKPAEVEALEEESEATEEVVEQEPQEEVQAEEVVEEPVSQEQPEEEVAAEEYAEAAQEEYEEQPESEQEGSGEYWEQFVGVEGYGYYDENNDWVWTGYFDENNNFVPDQYYDEDAAVAGDEQVEEYSAQQEQVQEEYEQQPEQEGSGEYWEQFVGVEGYGYYDENNDWVWTGYFDENNNFVPDQYYDEYAQPVSEEQYSESVSEEQEPASEEQVAEEPAQVEEVAVEQVPEETQPEQVQEKVQAYEHVEEQQPEEVFADAIDEHYDEITHVEDKAVEEEQIQTDNVVSSDEINWSNYVGNEDYGYYDENNEWVWKGYFNEYGMFIPQEEDYTDSIPVDEQPVEQTADLAEQNEEEVIEETTASDEIVQVEEEVESEPVVPTVSDDLVALEQPFEFDTQQFVGNIDFGYYDESSEWIWTGHFDKDGKFFDFDGNLVYSPQEGVKPVEVPKPTDLTNQIPQNALVVAEPDVFSEDTIQQVDESQFDVGEELVVRGLLNPASTPVQPQELNIKPVFEEEKLNLPVLANEVSLQPQVDYSKRSDFDQLVTQTPVVLEDVVADDLISVDTKGFVPELSQPTFAPKAVSQDQFKLVQPVVSQPKFDQITHLTDEIKMDVNVTSSDVDVQPIQINPSLEVASEPSKLDIFVKKPAVELKKIEFIEPVSEKIDLQIFEQQEIVTKPVSTIQKPTYTDETVSVSVNAIDETTSETDTIVQVTPTTSEASDFDINKILNTKPVETITVELPKDEPKLVTGVHVSLVDVEAKPVEEIVKFDSPKPSVSEVVVEKEDKLTLVEEEPFFNKFIGNEQYGYYNNKNVWIWTGYFDDQNNFVSDKDSKTQKVDQLIEEFNKQEAIKKTEEVEAKKASEPFYNKYIGNKQFGYYNDKNVWIWNGYFDENDQFVPDQSWTKRSEKLIEDELQKQRIHELELELAQAQQAILESTKLKDQEVAKIKEEVLKVQQEAIKAKEVATLRNFVPKGSPLLNPAKEVENSMIVYQEDKLEVNDLRNELSKLKTQREEFDNFSKIRDLDVINLYNASTSHRGMDYVFSGFEKKEEQFVKKPLHFLEEVKADPVQVAKEETISNLDQLLKQDPHLLLAKKTDKSVSPQASLTVLADQKEVELTQQAVRKQAEAIEAERVDVIKPLEQVQLNQSRSLLDDLTPKFEVKPSLIKDDVIQPKYNDDLEPIEQLQFKQERSLLDDYMPKFDDQGLFSKVEFKLPTVNKEYRPKVEPIDVIKPLEPVRINKERSLLDDYLPPKLNAQPTFEKTELDLGLEKPLANGELYEELKAEFSTTITPADSKDMIDQLLEETNDLITSSTQTRSTKIHSFSKSPLKTEPEPILDTKFDDKFIELDENQGFDQLIVESDDELLTDVVQEQVSVNQIAVTNEEYKKDMAELKQFLEKRSEELFKQYFSKFEELTKLQMESFNQIKNELRSEMNEIRDEVRSNKLALTSEITEEIYPSAPKVSRKQRGVHGFSEPTSEFDFDNSLSLVNENNYDLYELLDRIINYEDVPLTSSNLFKAEEYQAKVKQSVYNIKLILKNSEAEATKNYNYILSTLKNEITLLQKDLPIISSQLNKLQHDLRAKQLNRGDYKFVQEQIQELRAEHANKTRAISFYNKKVSDLKSIYAQQIRKIKSDYKKISDLANKRKVSSDYIDQALQSFETARVSQPNIKRNYEQLYRNQLQQNVNANYGNFRRYDPLIENHGYEYFSNHQPREFFSELESIDNDIFSSNDLIYSNRNTYLDENFRINDYELTSNFNDIDAIYGMDKLRLPPFEPSNLVNDMEFNSSFDIDFDTDF.

One copy of the HAT 1 repeat lies at 148–166 (YYDENEEWVWTGYFDEDNK). The segment at 174-244 (KPAEVEALEE…QPESEQEGSG (71 aa)) is disordered. Composition is skewed to acidic residues over residues 179–207 (EALE…EVVE) and 214–242 (QPEE…EQEG). HAT repeat units lie at residues 258–278 (YYDE…NNFV), 300–331 (AQQE…VEGY), and 333–353 (YYDE…NNFV). The tract at residues 294–319 (QVEEYSAQQEQVQEEYEQQPEQEGSG) is disordered. The disordered stretch occupies residues 365–393 (VSEEQYSESVSEEQEPASEEQVAEEPAQV). A compositionally biased stretch (acidic residues) spans 374 to 387 (VSEEQEPASEEQVA). HAT repeat units follow at residues 477-497 (YYDE…GMFI) and 959-997 (LTLV…DQNN). Positions 1000-1027 (SDKDSKTQKVDQLIEEFNKQEAIKKTEE) form a coiled coil. One copy of the HAT 7 repeat lies at 1029 to 1067 (EAKKASEPFYNKYIGNKQFGYYNDKNVWIWNGYFDENDQ). Coiled-coil stretches lie at residues 1082–1190 (IEDE…FDNF), 1547–1621 (SVNQ…LALT), and 1758–1790 (NRGD…NKKV).

It localises to the cell projection. The protein localises to the attachment organelle membrane. Component of the cytoskeleton-like structure which stabilizes the shape of the wall-less Mycoplasma. This cytoskeleton-like network of accessory proteins containing HMW proteins 1 to 5 allows the proper anchoring of cytadhesin proteins in the mycoplasmal membrane at the attachment organelle. In Mycoplasmoides gallisepticum (strain R(low / passage 15 / clone 2)) (Mycoplasma gallisepticum), this protein is Cytadherence high molecular weight protein 1 (hlp1).